The chain runs to 1486 residues: Chromosome partition protein MukB (1486 aa).

Residue 34 to 41 coordinates ATP; that stretch reads GGNGAGKS. 3 coiled-coil regions span residues 326 to 418, 444 to 480, and 509 to 603; these read LEAD…QYNQ, LETF…QAYQ, and RHLA…RAPV. The tract at residues 666 to 783 is flexible hinge; the sequence is PGGSEDQRLN…EVPLFGRAAR (118 aa). Coiled coils occupy residues 835 to 923, 977 to 1115, and 1209 to 1266; these read EAEI…AKLE, EMLS…TAKA, and VEAI…QNVS.

The protein belongs to the SMC family. MukB subfamily. Homodimerization via its hinge domain. Binds to DNA via its C-terminal region. Interacts, and probably forms a ternary complex, with MukE and MukF via its C-terminal region. The complex formation is stimulated by calcium or magnesium. Interacts with tubulin-related protein FtsZ.

Its subcellular location is the cytoplasm. The protein localises to the nucleoid. In terms of biological role, plays a central role in chromosome condensation, segregation and cell cycle progression. Functions as a homodimer, which is essential for chromosome partition. Involved in negative DNA supercoiling in vivo, and by this means organize and compact chromosomes. May achieve or facilitate chromosome segregation by condensation DNA from both sides of a centrally located replisome during cell division. The sequence is that of Chromosome partition protein MukB from Escherichia coli (strain K12 / MC4100 / BW2952).